The chain runs to 482 residues: MEREIPPELGLHAGLHVNAAVEGMAEEEGLHLLAGAAFDHAAAADVARGEGGGAEPCGGGEVNMEQQVQEGHVLDSGEGPSCADDRDKQEKKESLKEAAVLSRLTVNLMSRPRLETVYWQELQDEFQRGDMHLQYKYSFEQLKTHWLEPWEDMECAIKAFAKLALRPDCSYRITKTVTITSCAYIIGNGAIVEVDTSDRVAFRCRMQGMGPGVVGLDGITFINVRFAGDKFKGIMFEANTCLVLHGVYFLNFSNICVESWNKVSARGCTFYGCWKGLVGRPKSKLSVKKCLFEKCVLALIVEGDAHIRHNAASENACFVLLKGMAILKHNMVCGVSDQTMRRFVTCADGNCHTLKTVHIVSHSRHCWPVCDHNMFMRCTIHLGLRRGMFRPSQCNFSHSNIMLEPEVFSRVCLNGVFDLSVELCKVIRYNDDTRHRCRQCECGSSHLELRPIVLNVTEELRSDHLTLSCLRTDYESSDEDDN.

The tract at residues 73–94 is disordered; sequence VLDSGEGPSCADDRDKQEKKES. Basic and acidic residues predominate over residues 83-94; that stretch reads ADDRDKQEKKES. Phosphoserine is present on residues S476 and S477.

Belongs to the adenoviridae E1B 55 kDa protein family. As to quaternary structure, interacts with host PML-4 and PML-5; this interaction promotes efficient subnuclear targeting of E1B-55K to PML nuclear bodies. Interacts with E4-ORF3 protein. Interacts with E4-ORF6 protein.

The protein localises to the host nucleus. Its subcellular location is the host cytoplasm. Plays a major role to prevent cellular inhibition of viral genome replication. Assembles an SCF-like E3 ubiquitin ligase complex based on the cellular proteins ELOB, ELOC, CUL5 and RBX1, in cooperation with viral E4orf6. This viral RING-type ligase ubiquitinates cellular substrates and targets them to proteasomal degradation: TP53/p53, LIG4, MRE11-RAD50-NBS1 (MRN) complex, ITGA3, DAXX and BLM. E1B-55K probably acts as the substrate-specific adapter of the SCF-like E3 ubiquitin ligase complex. Degradation of host TP53/p53 activity is essential for preventing E1A-induced TP53 accumulation that would otherwise lead to cell apoptosis and growth arrest. E1B-55K also inactivates TP53 transcription-factor activity by binding its transactivation domain. E1B-55K also functions as a SUMO1 E3 ligase for TP53 which causes the latter to be sequestered in promyelocytic leukemia (PML) nuclear bodies thereby contributing to maximal inhibition of TP53 function. In Homo sapiens (Human), this protein is E1B 55 kDa protein.